The primary structure comprises 241 residues: Major prion protein (241 aa).

The first 15 residues, 1 to 15 (MLVLFVATWSDLGLC), serve as a signal peptide directing secretion. Residues 16 to 31 (KKRPKPGGWNTGGSRY) form an interaction with ADGRG6 region. An interaction with GRB2, ERI3 and SYN1 region spans residues 16–223 (KKRPKPGGWN…ESQAYYQRGS (208 aa)). Residues 18–101 (RPKPGGWNTG…WHKPNKPKTS (84 aa)) form a disordered region. A run of 5 repeats spans residues 44–52 (PQGGGGWGQ), 53–60 (PHGGGWGQ), 61–68 (PHGGGWGQ), 69–76 (PHGGGWGQ), and 77–84 (PHGGGWGQ). A 5 X 8 AA tandem repeats of P-H-G-G-G-W-G-Q region spans residues 44–84 (PQGGGGWGQPHGGGWGQPHGGGWGQPHGGGWGQPHGGGWGQ). Residues 45 to 88 (QGGGGWGQPHGGGWGQPHGGGWGQPHGGGWGQPHGGGWGQGGGT) show a composition bias toward gly residues. 12 residues coordinate Cu(2+): His54, Gly55, Gly56, His62, Gly63, Gly64, His70, Gly71, Gly72, His78, Gly79, and Gly80. The span at 91–101 (QWHKPNKPKTS) shows a compositional bias: basic residues. Residues Cys172 and Cys207 are joined by a disulfide bond. Asn174 and Asn190 each carry an N-linked (GlcNAc...) asparagine glycan. Ser223 carries the GPI-anchor amidated serine lipid modification. Positions 224–241 (SMVLFSSPPVILLISFLI) are cleaved as a propeptide — removed in mature form.

This sequence belongs to the prion family. Monomer and homodimer. Has a tendency to aggregate into amyloid fibrils containing a cross-beta spine, formed by a steric zipper of superposed beta-strands. Soluble oligomers may represent an intermediate stage on the path to fibril formation. Copper binding may promote oligomerization. Interacts with GRB2, APP, ERI3/PRNPIP and SYN1. Mislocalized cytosolically exposed PrP interacts with MGRN1; this interaction alters MGRN1 subcellular location and causes lysosomal enlargement. Interacts with APP. Interacts with KIAA1191. Interacts with ADGRG6.

Its subcellular location is the cell membrane. It localises to the golgi apparatus. Its function is as follows. Its primary physiological function is unclear. May play a role in neuronal development and synaptic plasticity. May be required for neuronal myelin sheath maintenance. May promote myelin homeostasis through acting as an agonist for ADGRG6 receptor. May play a role in iron uptake and iron homeostasis. Soluble oligomers are toxic to cultured neuroblastoma cells and induce apoptosis (in vitro). Association with GPC1 (via its heparan sulfate chains) targets PRNP to lipid rafts. Also provides Cu(2+) or Zn(2+) for the ascorbate-mediated GPC1 deaminase degradation of its heparan sulfate side chains. The polypeptide is Major prion protein (PRNP) (Mandrillus sphinx (Mandrill)).